Reading from the N-terminus, the 370-residue chain is Probable endopolygalacturonase A (370 aa).

A signal peptide spans 1 to 19 (MPSAKPLFCLATLAGAALA). Positions 20–32 (APAPSRVSDFTKR) are excised as a propeptide. C35 and C50 form a disulfide bridge. PbH1 repeat units follow at residues 162–192 (SDNL…DISE), 193–214 (STYI…AINS), 215–235 (GENI…SIGS), 244–265 (VKNV…RIKT), 273–295 (VEDI…VIEQ), and 307–352 (SNGV…DITG). D207 acts as the Proton donor in catalysis. The cysteines at positions 209 and 225 are disulfide-linked. H229 is an active-site residue. N246 carries N-linked (GlcNAc...) asparagine glycosylation. Disulfide bonds link C335–C340 and C359–C368.

It belongs to the glycosyl hydrolase 28 family.

It localises to the secreted. It carries out the reaction (1,4-alpha-D-galacturonosyl)n+m + H2O = (1,4-alpha-D-galacturonosyl)n + (1,4-alpha-D-galacturonosyl)m.. Involved in maceration and soft-rotting of plant tissue. Hydrolyzes the 1,4-alpha glycosidic bonds of de-esterified pectate in the smooth region of the plant cell wall. This Aspergillus niger (strain ATCC MYA-4892 / CBS 513.88 / FGSC A1513) protein is Probable endopolygalacturonase A (pgaA).